Consider the following 226-residue polypeptide: N-(5'-phosphoribosyl)anthranilate isomerase 2 (226 aa).

It belongs to the TrpF family.

The enzyme catalyses N-(5-phospho-beta-D-ribosyl)anthranilate = 1-(2-carboxyphenylamino)-1-deoxy-D-ribulose 5-phosphate. It functions in the pathway amino-acid biosynthesis; L-tryptophan biosynthesis; L-tryptophan from chorismate: step 3/5. The protein is N-(5'-phosphoribosyl)anthranilate isomerase 2 (trpF2) of Methanosarcina mazei (strain ATCC BAA-159 / DSM 3647 / Goe1 / Go1 / JCM 11833 / OCM 88) (Methanosarcina frisia).